Here is a 397-residue protein sequence, read N- to C-terminus: Dual specificity mitogen-activated protein kinase kinase 2 (397 aa).

The disordered stretch occupies residues 1 to 21 (MAPKRRPVPLIIAPTGEGQST). Residues 69–366 (FDPICELGAG…LKMLMGHTFI (298 aa)) enclose the Protein kinase domain. ATP contacts are provided by residues 75–83 (LGAGNGGVV) and lysine 98. The active-site Proton acceptor is aspartate 191. Serine 219 and serine 223 each carry phosphoserine; by RAF. The interval 284–306 (GGAEGHSMSPRQRPPGRPVSGHG) is disordered.

Belongs to the protein kinase superfamily. STE Ser/Thr protein kinase family. MAP kinase kinase subfamily. Post-translationally, phosphorylation on Ser/Thr by MAP kinase kinase kinases (RAF) positively regulates the kinase activity.

It catalyses the reaction L-seryl-[protein] + ATP = O-phospho-L-seryl-[protein] + ADP + H(+). The catalysed reaction is L-threonyl-[protein] + ATP = O-phospho-L-threonyl-[protein] + ADP + H(+). The enzyme catalyses L-tyrosyl-[protein] + ATP = O-phospho-L-tyrosyl-[protein] + ADP + H(+). In terms of biological role, catalyzes the concomitant phosphorylation of a threonine and a tyrosine residue in a Thr-Glu-Tyr sequence located in MAP kinases. This is Dual specificity mitogen-activated protein kinase kinase 2 (map2k2) from Cyprinus carpio (Common carp).